The following is a 255-amino-acid chain: Zinc D-Ala-D-Ala carboxypeptidase (255 aa).

Positions M1–L42 are cleaved as a signal peptide. D43 bears the Blocked amino end (Asp) mark. Cystine bridges form between C45–C123 and C136–C184. R180 is a binding site for substrate. H196 serves as a coordination point for Zn(2+). A disulfide bridge connects residues C212 and C253. Residue H234 is the Proton donor of the active site. Zn(2+) contacts are provided by H237 and H239.

The protein belongs to the peptidase M15 family. It depends on Zn(2+) as a cofactor. The N-terminus is partially blocked as a result of the cyclization of the first two amino acids into anhydroaspartylglycine imide.

It localises to the secreted. The catalysed reaction is Cleavage of the bond: (Ac)2-L-lysyl-D-alanyl-|-D-alanine.. In terms of biological role, this enzyme catalyzes carboxypeptidation and transpeptidation reactions involved in bacterial cell wall metabolism. It effectively catalyzes the transfer of the N-alpha, N-epsilon-diacetyl-L-lysyl-D-alanyl electrophilic group of the standard tripeptide substrate N-alpha,N-epsilon-diacetyl-L-lysyl-D-alanyl-D-alanine to water. It also performs a weak beta-lactamase activity, hydrolyzing penicillin into penicilloate at a very low rate. The protein is Zinc D-Ala-D-Ala carboxypeptidase of Streptomyces albus G.